A 296-amino-acid polypeptide reads, in one-letter code: Probable deoxyuridine 5'-triphosphate nucleotidohydrolase (296 aa).

Positions 66 to 102 form a coiled coil; the sequence is EIDKNIVKNLEDKVNCLEQDVQYLKNELKKKDADWQQ.

It belongs to the dUTPase family.

It catalyses the reaction dUTP + H2O = dUMP + diphosphate + H(+). It functions in the pathway pyrimidine metabolism; dUMP biosynthesis; dUMP from dCTP (dUTP route): step 2/2. This enzyme is involved in nucleotide metabolism: it produces dUMP, the immediate precursor of thymidine nucleotides and it decreases the intracellular concentration of dUTP so that uracil cannot be incorporated into DNA. This Acheta domesticus (House cricket) protein is Probable deoxyuridine 5'-triphosphate nucleotidohydrolase.